Reading from the N-terminus, the 211-residue chain is Prolactin-1 (211 aa).

A signal peptide spans 1–23; it reads MARRSQGTKLHLAVLCLVVSCHA. 2 cysteine pairs are disulfide-bonded: cysteine 69-cysteine 184 and cysteine 201-cysteine 211.

The protein belongs to the somatotropin/prolactin family.

The protein resides in the secreted. The sequence is that of Prolactin-1 (prl1) from Oncorhynchus keta (Chum salmon).